Reading from the N-terminus, the 180-residue chain is DNA-directed RNA polymerase subunit omega (180 aa).

The tract at residues 100–180 (ISKSGTPILP…NSDDSETTNS (81 aa)) is disordered. Acidic residues-rich tracts occupy residues 137–151 (EVDVDAELEVGDEET) and 159–180 (AEAETEAETTEVNSDDSETTNS).

It belongs to the RNA polymerase subunit omega family. In terms of assembly, the RNAP catalytic core consists of 2 alpha, 1 beta, 1 beta' and 1 omega subunit. When a sigma factor is associated with the core the holoenzyme is formed, which can initiate transcription.

It carries out the reaction RNA(n) + a ribonucleoside 5'-triphosphate = RNA(n+1) + diphosphate. Functionally, promotes RNA polymerase assembly. Latches the N- and C-terminal regions of the beta' subunit thereby facilitating its interaction with the beta and alpha subunits. In Pelagibacter ubique (strain HTCC1062), this protein is DNA-directed RNA polymerase subunit omega.